A 499-amino-acid chain; its full sequence is Neuronal acetylcholine receptor subunit alpha-7 (499 aa).

Residues 1–19 form the signal peptide; that stretch reads MRGSLCLALAASILHVSLQ. At 20 to 230 the chain is on the extracellular side; the sequence is GEFQRKLYKD…VSIRRRTLYY (211 aa). Positions 39 and 41 each coordinate Ca(2+). N-linked (GlcNAc...) asparagine glycans are attached at residues asparagine 43, asparagine 87, and asparagine 130. Residues cysteine 147 and cysteine 161 are joined by a disulfide bond. Residues serine 169 and tyrosine 207 each contribute to the Ca(2+) site. Residues cysteine 209 and cysteine 210 are joined by a disulfide bond. Helical transmembrane passes span 231-251, 259-279, and 292-312; these read GLNL…VFLL, ISLG…VAEI, and QYFA…VIVL. Residues 257–264 form an essential for TMEM35A/NACHO-mediated proper subunit assembly and trafficking to cell membrane region; sequence EKISLGIT. Residues 313-466 are Cytoplasmic-facing; it reads QYHHHDPDGG…WKFAACVVDR (154 aa). Residues 467 to 487 form a helical membrane-spanning segment; the sequence is LCLMAFSVFTILCTIGILMSA.

This sequence belongs to the ligand-gated ion channel (TC 1.A.9) family. Acetylcholine receptor (TC 1.A.9.1) subfamily. Alpha-7/CHRNA7 sub-subfamily. As to quaternary structure, homopentamer. Homooligomer of the short form gives rise to unfunctional channels, as does coexpression of both long and short forms of the receptor. Can also form heteropentamers with CHRNB2, mainly found in basal forebrain cholinergic neurons. Interacts with RIC3; which is required for proper folding and assembly. Interacts with LYPD6. Interacts with CANX. In terms of processing, glycosylations at Asn-43, Asn-87 and Asn-130 are essential for TMEM35A/NACHO-mediated proper subunit assembly and trafficking to the cell membrane. In terms of tissue distribution, at least in chromaffin cells.

The protein resides in the postsynaptic cell membrane. It is found in the cell membrane. It carries out the reaction Ca(2+)(in) = Ca(2+)(out). The catalysed reaction is K(+)(in) = K(+)(out). The enzyme catalyses Na(+)(in) = Na(+)(out). It catalyses the reaction choline(out) = choline(in). It carries out the reaction NH4(+)(in) = NH4(+)(out). The catalysed reaction is L-arginine(in) = L-arginine(out). The enzyme catalyses guanidine(out) = guanidine(in). Its activity is regulated as follows. Activated by a myriad of ligands such as acetylcholine, cytisine, nicotine, choline and epibatidine. Oligomeric amyloid-beta protein 42 activates specifially CHRNA7:CHRNB2 nAchRs. Activity is modulated by positive allosteric modulators (PAMs), such as flavonoids, with a wide range of chemical diversity, pharmacological sensitivity and efficacy. AChR activity is inhibited by the antagonists alpha-conotoxons RgIA, ImI and ImII, small disulfide-constrained peptides from cone snails. Alpha-conotoxin PnIC selectively inhibits CHRNA7:CHRNB2 over CHRNA7 homopentamer. Functionally, component of neuronal acetylcholine receptors (nAChRs) that function as pentameric, ligand-gated cation channels with high calcium permeability among other activities. nAChRs are excitatory neurotrasnmitter receptors formed by a collection of nAChR subunits known to mediate synaptic transmission in the nervous system and the neuromuscular junction. Each nAchR subunit confers differential attributes to channel properties, including activation, deactivation and desensitization kinetics, pH sensitivity, cation permeability, and binding to allosteric modulators. CHRNA7 forms homopentameric neuronal acetylcholine receptors abundantly expressed in the central nervous system, characterized by fast desensitization and high calcium permeability. Also forms heteropentamers with CHRNB2, mainly expressed in basal forebrain cholinergic neurons. Involved in the modulation of calcium-dependent signaling pathways and influences the release of neurotransmitters, including dopamine, glutamate and GABA. Also expressed in non-neuronal cells such as immune cells like lymphocytes, monocytes and macrophages. In T cells, activation induces metabotropic signaling that results in an increase of intracellular Ca2+ concentrations, independent of ionotropic receptor functions. In macrophages, required for acetylcholine-mediated inhibition of TNF and other inflammatory cytokine release. Once activated by acetylcholine, nicotine or other agonists, selectively inhibits production of pro-inflammatory cytokines while leaving anti-inflammatory cytokines undisturbed. Stimulates the cholinergic anti-inflammatory pathway, controlling inflammation by inhibiting NFKB nuclear translocation and activating the JAK2-STAT3 pathway, independently of ion channel activity. Also expressed in the urothelium where it modulates reflex bladder activity by increasing intracellular calcium through internal stores and decreasing basal ATP release. The protein is Neuronal acetylcholine receptor subunit alpha-7 (CHRNA7) of Bos taurus (Bovine).